We begin with the raw amino-acid sequence, 221 residues long: MAKMDHDYRLNIVLVGDNQCGKSFLLSRYCDGMFVENGIQLWHGIEIKNKIIELKNQSTNEIVKVKLMIFDGNGGCKFKELFYENYLKHQHGFIIMYDVTNLESFNNLSNWISKIKNSYQTSNLYPSPEPILFIVGNKCDLIDDSKITTIVDLKKPQEFCDSLSIPSIHNVSVKENINVDLIFQKLSQLIMDTYPPPKISEIKKIKNVDSGGDSINNCIIN.

16 to 23 contacts GTP; it reads GDNQCGKS. An Effector region motif is present at residues 38–47; it reads GIQLWHGIEI. Residues 71-75 and 137-140 each bind GTP; these read DGNGG and NKCD. At cysteine 218 the chain carries Cysteine methyl ester. A lipid anchor (S-geranylgeranyl cysteine) is attached at cysteine 218. Residues 219–221 constitute a propeptide, removed in mature form; the sequence is IIN.

It belongs to the small GTPase superfamily. Rab family.

The protein localises to the cell membrane. In Dictyostelium discoideum (Social amoeba), this protein is Ras-related protein RabS (rabS).